Here is an 85-residue protein sequence, read N- to C-terminus: Putative membrane protein insertion efficiency factor (85 aa).

Belongs to the UPF0161 family.

It localises to the cell membrane. Its function is as follows. Could be involved in insertion of integral membrane proteins into the membrane. The chain is Putative membrane protein insertion efficiency factor from Buchnera aphidicola subsp. Baizongia pistaciae (strain Bp).